Here is a 138-residue protein sequence, read N- to C-terminus: Ribosome-binding factor A (138 aa).

The protein belongs to the RbfA family. Monomer. Binds 30S ribosomal subunits, but not 50S ribosomal subunits or 70S ribosomes.

It localises to the cytoplasm. One of several proteins that assist in the late maturation steps of the functional core of the 30S ribosomal subunit. Associates with free 30S ribosomal subunits (but not with 30S subunits that are part of 70S ribosomes or polysomes). Required for efficient processing of 16S rRNA. May interact with the 5'-terminal helix region of 16S rRNA. The chain is Ribosome-binding factor A from Pseudoalteromonas atlantica (strain T6c / ATCC BAA-1087).